Consider the following 253-residue polypeptide: Tabinhibitin 3 (253 aa).

The signal sequence occupies residues Met1–Ala22. Positions Leu66 to Phe209 constitute an SCP domain. A Cell attachment site motif is present at residues Arg222–Asp224.

This sequence belongs to the CRISP family. As to expression, expressed in salivary glands.

Its subcellular location is the secreted. Its function is as follows. Inhibits platelet aggregation induced by all agonists tested (ADP, arachidonic acid, the thromboxane A2 analog U46619, thrombin, and snake venom snaclecs (TMVA that activates platelet through GPIB, and stejnulxin that specifically acts through GPVI (GP6))). May act by competing with fibrinogen for binding to glycoprotein IIb/IIIa (ITGA2B/ITGB3). The protein is Tabinhibitin 3 of Tabanus yao (Horsefly).